The sequence spans 668 residues: Lebercilin-like protein (668 aa).

A disordered region spans residues 17–44; it reads SVALENNRRSAECKRSPGTGDFSRNSSA. Over residues 22 to 31 the composition is skewed to basic and acidic residues; that stretch reads NNRRSAECKR. Coiled coils occupy residues 148–259 and 305–336; these read LHKI…EREE and AAQT…IKNI. Residues 351–402 form a disordered region; the sequence is YPKVSSTKSVQADRKSLPFTSMRHQGTQKSDVPPLTTKGKKATGNMNHKEKS. Residues 368–380 are compositionally biased toward polar residues; the sequence is PFTSMRHQGTQKS. The stretch at 420–440 forms a coiled coil; sequence EDSKTKYEDLSREEKHLEVQV. 3 disordered regions span residues 495–520, 533–581, and 605–668; these read RSMQ…PLRQ, LHHG…FGKS, and SGYV…KIII. Polar residues predominate over residues 546 to 558; the sequence is AGNTKYSHSTSKH. Composition is skewed to basic and acidic residues over residues 560 to 572 and 621 to 632; these read SNRE…HSDS and GSEEPLQSKESH. Residues 633–660 are compositionally biased toward polar residues; that stretch reads PPSQASASNAFGDSKVTVVNSIKPSSPT.

The protein belongs to the LCA5 family.

The polypeptide is Lebercilin-like protein (Macaca fascicularis (Crab-eating macaque)).